Here is an 805-residue protein sequence, read N- to C-terminus: Ribosome biogenesis protein ERB1 (805 aa).

The interval 1–105 is disordered; that stretch reads MVKGRKSQKA…SDFSEDDTKS (105 aa). Basic and acidic residues predominate over residues 8-22; it reads QKADKVTKAKKRVAD. Acidic residues predominate over residues 23-75; sequence EVDESESEPELQVEGLIDAEAESEDDESFESAEENASAEEDEEDEEDEEDSDA. The segment at 264-382 is required for interaction with NOP7; sequence RFVPSKNEAK…LRKVPGYTES (119 aa). The segment at 382-418 is required for interaction with YTM1; it reads SVRERFERSLDLYLAPRMRKNKLNIDPESLIPELPSP. WD repeat units follow at residues 434 to 473, 482 to 522, 590 to 632, 635 to 673, 676 to 715, 719 to 758, and 775 to 805; these read GHEG…EVYR, NPED…YDIE, VCKK…TQSP, KSKG…LVKK, PGAR…TPYK, YHDK…DMMK, and GHLG…MWTT.

It belongs to the WD repeat BOP1/ERB1 family. Component of the NOP7 complex, composed of ERB1, NOP7 and YTM1. The complex is held together by ERB1, which interacts with NOP7 via its N-terminal domain and with YTM1 via a high-affinity interaction between the seven-bladed beta-propeller domains of the 2 proteins. The NOP7 complex associates with the 66S pre-ribosome.

It is found in the nucleus. Its subcellular location is the nucleolus. It localises to the nucleoplasm. Component of the NOP7 complex, which is required for maturation of the 25S and 5.8S ribosomal RNAs and formation of the 60S ribosome. The polypeptide is Ribosome biogenesis protein ERB1 (Candida glabrata (strain ATCC 2001 / BCRC 20586 / JCM 3761 / NBRC 0622 / NRRL Y-65 / CBS 138) (Yeast)).